Reading from the N-terminus, the 249-residue chain is Molybdate/tungstate transport system permease protein WtpB (249 aa).

Residues Met1 to Ala10 are Cytoplasmic-facing. A helical transmembrane segment spans residues Phe11–Ile31. At Lys32–Ser56 the chain is on the extracellular side. In terms of domain architecture, ABC transmembrane type-1 spans Ile53–Leu239. A helical transmembrane segment spans residues Leu57–Val77. The Cytoplasmic portion of the chain corresponds to Leu78 to Pro96. Residues Ile97 to Leu117 traverse the membrane as a helical segment. Asp118 is a topological domain (extracellular). A helical membrane pass occupies residues Asn119–Ala139. The Cytoplasmic portion of the chain corresponds to Arg140–Ser179. The helical transmembrane segment at Gly180–Tyr200 threads the bilayer. Residues Tyr201–Pro223 lie on the Extracellular side of the membrane. Residues Ile224–Gly244 form a helical membrane-spanning segment. Residues Arg245–Ala249 lie on the Cytoplasmic side of the membrane.

It belongs to the binding-protein-dependent transport system permease family. The complex is composed of two ATP-binding proteins (WtpC), two transmembrane proteins (WtpB) and a solute-binding protein (WtpA).

Its subcellular location is the cell membrane. In terms of biological role, part of the ABC transporter complex WtpABC involved in molybdate/tungstate import. Probably responsible for the translocation of the substrate across the membrane. The sequence is that of Molybdate/tungstate transport system permease protein WtpB from Pyrococcus furiosus (strain ATCC 43587 / DSM 3638 / JCM 8422 / Vc1).